Reading from the N-terminus, the 1755-residue chain is Transposon Ty1-DR6 Gag-Pol polyprotein (1755 aa).

Polar residues-rich tracts occupy residues 1–23 (MESQQLSQHSPISHGSACASVTS), 48–60 (TKANSQQTTTPAS), and 127–152 (QSQFPQYPSSVGTPLSTPSPESGNTF). Disordered stretches follow at residues 1-93 (MESQ…MMTQ), 126-174 (PQSQ…PPPM), and 352-421 (GSRN…SKST). The segment covering 153 to 165 (TDSSSADSDMTST) has biased composition (low complexity). The interval 299–401 (NNGIHINNKV…NSKSKTARAH (103 aa)) is RNA-binding. The segment covering 402-418 (NVSTSNNSPSTDNDSIS) has biased composition (low complexity). Ser-416 is modified (phosphoserine). Residue Asp-461 is the For protease activity; shared with dimeric partner of the active site. The integrase-type zinc finger-like stretch occupies residues 583-640 (NVHTSESTRKYPYPFIHRMLAHANAQTIRYSLKNNTITYFNESDVDWSSAIDYQCPDC). The 176-residue stretch at 660–835 (NSYEPFQYLH…AGLDISTLLP (176 aa)) folds into the Integrase catalytic domain. 2 residues coordinate Mg(2+): Asp-671 and Asp-736. Disordered stretches follow at residues 956-1087 (SKAV…ETEK), 1092-1111 (RSPSIDASPPENNSSHNIVP), and 1130-1187 (DLPL…DNET). Positions 960-969 (SPTDSTPPST) are enriched in low complexity. A compositionally biased stretch (polar residues) spans 1005–1015 (STPQISNIEST). Positions 1038–1053 (ESSHASKSKDFRHSDS) are enriched in basic and acidic residues. 2 stretches are compositionally biased toward polar residues: residues 1054–1082 (YSENETNHTNVPISSTGGTNNKTVPQISD) and 1101–1111 (PENNSSHNIVP). Residues 1178 to 1212 (KKRSLEDNETEIKVSRDTWNTKNMRSLEPPRSKKR) carry the Bipartite nuclear localization signal motif. In terms of domain architecture, Reverse transcriptase Ty1/copia-type spans 1338 to 1476 (NNYYITQLDI…DILGLEIKYQ (139 aa)). Residues Asp-1346, Asp-1427, Asp-1428, Asp-1610, Glu-1652, and Asp-1685 each contribute to the Mg(2+) site. The RNase H Ty1/copia-type domain maps to 1610–1752 (DASYGNQPYY…IKTFKLLTNK (143 aa)).

In terms of assembly, the capsid protein forms a homotrimer, from which the VLPs are assembled. The protease is a homodimer, whose active site consists of two apposed aspartic acid residues. Post-translationally, initially, virus-like particles (VLPs) are composed of the structural unprocessed proteins Gag and Gag-Pol, and also contain the host initiator methionine tRNA (tRNA(i)-Met) which serves as a primer for minus-strand DNA synthesis, and a dimer of genomic Ty RNA. Processing of the polyproteins occurs within the particle and proceeds by an ordered pathway, called maturation. First, the protease (PR) is released by autocatalytic cleavage of the Gag-Pol polyprotein yielding capsid protein p45 and a Pol-p154 precursor protein. This cleavage is a prerequisite for subsequent processing of Pol-p154 at the remaining sites to release the mature structural and catalytic proteins. Maturation takes place prior to the RT reaction and is required to produce transposition-competent VLPs.

It is found in the cytoplasm. The protein resides in the nucleus. It carries out the reaction DNA(n) + a 2'-deoxyribonucleoside 5'-triphosphate = DNA(n+1) + diphosphate. It catalyses the reaction Endonucleolytic cleavage to 5'-phosphomonoester.. Capsid protein (CA) is the structural component of the virus-like particle (VLP), forming the shell that encapsulates the retrotransposons dimeric RNA genome. The particles are assembled from trimer-clustered units and there are holes in the capsid shells that allow for the diffusion of macromolecules. CA also has nucleocapsid-like chaperone activity, promoting primer tRNA(i)-Met annealing to the multipartite primer-binding site (PBS), dimerization of Ty1 RNA and initiation of reverse transcription. In terms of biological role, the aspartyl protease (PR) mediates the proteolytic cleavages of the Gag and Gag-Pol polyproteins after assembly of the VLP. Functionally, reverse transcriptase/ribonuclease H (RT) is a multifunctional enzyme that catalyzes the conversion of the retro-elements RNA genome into dsDNA within the VLP. The enzyme displays a DNA polymerase activity that can copy either DNA or RNA templates, and a ribonuclease H (RNase H) activity that cleaves the RNA strand of RNA-DNA heteroduplexes during plus-strand synthesis and hydrolyzes RNA primers. The conversion leads to a linear dsDNA copy of the retrotransposon that includes long terminal repeats (LTRs) at both ends. Its function is as follows. Integrase (IN) targets the VLP to the nucleus, where a subparticle preintegration complex (PIC) containing at least integrase and the newly synthesized dsDNA copy of the retrotransposon must transit the nuclear membrane. Once in the nucleus, integrase performs the integration of the dsDNA into the host genome. The protein is Transposon Ty1-DR6 Gag-Pol polyprotein (TY1B-DR6) of Saccharomyces cerevisiae (strain ATCC 204508 / S288c) (Baker's yeast).